A 356-amino-acid chain; its full sequence is Leucine carboxyl methyltransferase 1 (356 aa).

S-adenosyl-L-methionine contacts are provided by residues arginine 78, glycine 101, aspartate 127, 183–184 (DL), and glutamate 218.

It belongs to the methyltransferase superfamily. LCMT family.

It carries out the reaction [phosphatase 2A protein]-C-terminal L-leucine + S-adenosyl-L-methionine = [phosphatase 2A protein]-C-terminal L-leucine methyl ester + S-adenosyl-L-homocysteine. Methylates the carboxyl group of the C-terminal leucine residue of protein phosphatase 2A catalytic subunits to form alpha-leucine ester residues. This chain is Leucine carboxyl methyltransferase 1 (PPM1), found in Cryptococcus neoformans var. neoformans serotype D (strain JEC21 / ATCC MYA-565) (Filobasidiella neoformans).